A 688-amino-acid chain; its full sequence is Homoaconitase, mitochondrial (688 aa).

Cysteine 335, cysteine 395, and cysteine 398 together coordinate [4Fe-4S] cluster. A disordered region spans residues 468–494; sequence SIDLPKSSGNTGATSEEPISEDDTSEA.

Belongs to the aconitase/IPM isomerase family. Requires [4Fe-4S] cluster as cofactor.

Its subcellular location is the mitochondrion. It catalyses the reaction (2R,3S)-homoisocitrate = cis-homoaconitate + H2O. Its pathway is amino-acid biosynthesis; L-lysine biosynthesis via AAA pathway; L-alpha-aminoadipate from 2-oxoglutarate: step 3/5. In terms of biological role, catalyzes the reversible hydration of cis-homoaconitate to (2R,3S)-homoisocitrate, a step in the alpha-aminoadipate pathway for lysine biosynthesis. This is Homoaconitase, mitochondrial (LYS4) from Candida parapsilosis (Yeast).